A 103-amino-acid polypeptide reads, in one-letter code: Transcription factor S (103 aa).

Zn(2+)-binding residues include Cys4, Cys7, Cys20, Cys23, Cys64, Cys67, Cys92, and Cys95. Residues 4 to 23 (CPKCKSLMIYQGDKLVCRKC) form a C4-type zinc finger. The segment at 60–100 (TKAICPACGHNEAFWWLRQLRAADESEVRFFRCTKCGKTWR) adopts a TFIIS-type zinc-finger fold.

It belongs to the archaeal RpoM/eukaryotic RPA12/RPB9/RPC11 RNA polymerase family.

Its function is as follows. Induces RNA cleavage activity in the RNA polymerase. In its presence, the cleavage activity of the RNA polymerase truncates the RNA back to position +15 in a stepwise manner by releasing mainly dinucleotides from the 3'-end of the nascent RNA. The truncated RNAs are able to continue elongation. Involved in transcriptional proofreading and fidelity. Misincorporation of nucleotides during elongation of transcription leads to arrested elongation complexes which are rescued by TFS-promoted removal of a dinucleotide from the 3'-end. TFS is able to induce a cleavage resynthesis cycle in stalled elongation complexes (resulting from the next missing nucleotide or a reduced incorporation rate of a wrong nucleotide) preventing misincorporation and enabling proofreading in a post-incorporation manner. Pausing of elongation complexes is the main determinant of TFS-induced RNA cleavage. This Archaeoglobus fulgidus (strain ATCC 49558 / DSM 4304 / JCM 9628 / NBRC 100126 / VC-16) protein is Transcription factor S.